The chain runs to 80 residues: CDC42 small effector protein 1 (80 aa).

Residues Cys10 and Cys11 are each lipidated (S-palmitoyl cysteine). The CRIB domain maps to 30-43 (IGEPMNFVHLTHIG). Residues 48–80 (GAGDGLAMTGAVQEQMRSKGNHRDRPWSNSRAL) are disordered.

Belongs to the CDC42SE/SPEC family. As to quaternary structure, interacts with CDC42 (in GTP-bound form). Interacts weakly with RAC1 and not at all with RHOA.

The protein resides in the cytoplasm. It is found in the cytoskeleton. Its subcellular location is the cell membrane. Probably involved in the organization of the actin cytoskeleton by acting downstream of CDC42, inducing actin filament assembly. Alters CDC42-induced cell shape changes. In activated T-cells, may play a role in CDC42-mediated F-actin accumulation at the immunological synapse. May play a role in early contractile events in phagocytosis in macrophages. The protein is CDC42 small effector protein 1 (Cdc42se1) of Mus musculus (Mouse).